The primary structure comprises 1209 residues: Phospholipid-transporting ATPase ID (1209 aa).

Over residues 1 to 12 (MTVPKEMPEKWA) the composition is skewed to basic and acidic residues. The segment at 1–36 (MTVPKEMPEKWARAQAPPSWSRKKPSWGTEEERRAR) is disordered. Over 1–64 (MTVPKEMPEK…TSKYNILTFL (64 aa)) the chain is Cytoplasmic. The helical transmembrane segment at 65-86 (PVNLFEQFQEVANTYFLFLLIL) threads the bilayer. At 87–92 (QLIPQI) the chain is on the exoplasmic loop side. The helical transmembrane segment at 93–112 (SSLSWFTTIVPLVLVLTITA) threads the bilayer. At 113–295 (VKDATDDYFR…TSIDRLMNTL (183 aa)) the chain is on the cytoplasmic side. The chain crosses the membrane as a helical span at residues 296–317 (VLWIFGFLVCMGVILAIGNAIW). At 318–346 (EHEVGMRFQVYLPWDEAVDSAFFSGFLSF) the chain is on the exoplasmic loop side. The helical transmembrane segment at 347–368 (WSYIIILNTVVPISLYVSVEVI) threads the bilayer. At 369–889 (RLGHSYFINW…GRWSYLRMCK (521 aa)) the chain is on the cytoplasmic side. Catalysis depends on aspartate 411, which acts as the 4-aspartylphosphate intermediate. Residues aspartate 411, lysine 412, threonine 413, glutamate 515, phenylalanine 556, lysine 579, arginine 613, threonine 693, glycine 694, aspartate 695, arginine 807, and lysine 813 each coordinate ATP. Aspartate 411 contributes to the Mg(2+) binding site. Residue threonine 413 participates in Mg(2+) binding. Aspartate 833 serves as a coordination point for Mg(2+). ATP-binding residues include asparagine 836 and aspartate 837. Position 837 (aspartate 837) interacts with Mg(2+). The helical transmembrane segment at 890–910 (FLCYFFYKNFAFTMVHFWFGF) threads the bilayer. At 911–922 (FCGFSAQTVYDQ) the chain is on the exoplasmic loop side. A helical membrane pass occupies residues 923-942 (YFITLYNIVYTSLPVLAMGV). The Cytoplasmic portion of the chain corresponds to 943-972 (FDQDVPEQRSMEYPKLYEPGQLNLLFNKRE). Residues 973-994 (FFICIAQGIYTSVLMFFIPYGV) form a helical membrane-spanning segment. Residues 995-1008 (FADATRDDGTQLAD) lie on the Exoplasmic loop side of the membrane. The chain crosses the membrane as a helical span at residues 1009 to 1031 (YQSFAVTVATSLVIVVSVQIGLD). Residues 1032–1037 (TGYWTA) lie on the Cytoplasmic side of the membrane. The helical transmembrane segment at 1038-1058 (INHFFIWGSLAVYFAILFAMH) threads the bilayer. Residues 1059-1078 (SNGLFDMFPNQFRFVGNAQN) are Exoplasmic loop-facing. The chain crosses the membrane as a helical span at residues 1079–1103 (TLAQPTVWLTIVLTTVVCIMPVVAF). Over 1104–1209 (RFLRLNLKPD…SGGADKPLKG (106 aa)) the chain is Cytoplasmic. Position 1175 is a phosphoserine (serine 1175). The segment at 1181–1209 (SSSWIESLRRKKSDSASSPSGGADKPLKG) is disordered. The span at 1195 to 1209 (SASSPSGGADKPLKG) shows a compositional bias: low complexity.

This sequence belongs to the cation transport ATPase (P-type) (TC 3.A.3) family. Type IV subfamily. As to quaternary structure, component of a P4-ATPase flippase complex which consists of a catalytic alpha subunit ATP8B2 and an accessory beta subunit TMEM30A or TMEM30B. Requires Mg(2+) as cofactor. In terms of tissue distribution, isoform 3 is ubiquitous, with highest expression in aorta, cerebellum and uterus.

It is found in the cell membrane. Its subcellular location is the endoplasmic reticulum membrane. The enzyme catalyses ATP + H2O + phospholipidSide 1 = ADP + phosphate + phospholipidSide 2.. The catalysed reaction is a 1,2-diacyl-sn-glycero-3-phosphocholine(out) + ATP + H2O = a 1,2-diacyl-sn-glycero-3-phosphocholine(in) + ADP + phosphate + H(+). Catalytic component of P4-ATPase flippase complex, which catalyzes the hydrolysis of ATP coupled to the transport of phosphatidylcholine (PC) from the outer to the inner leaflet of the plasma membrane. May contribute to the maintenance of membrane lipid asymmetry. The chain is Phospholipid-transporting ATPase ID from Homo sapiens (Human).